We begin with the raw amino-acid sequence, 362 residues long: B3 domain-containing protein IDEF1 (362 aa).

The segment at 30-91 (VPFPNPFPAP…TPTPTPRGFA (62 aa)) is disordered. The span at 48 to 70 (PHNHNHNHNHNHNIHNSHNHNHN) shows a compositional bias: basic residues. The TF-B3 DNA-binding region spans 253–355 (LRKELTKSDV…KFIIRGEKAI (103 aa)).

Polyubiquitinated. Ubiquitination leads to its subsequent degradation via the proteasome pathway. In terms of tissue distribution, expressed in roots.

The protein localises to the nucleus. Its function is as follows. Transcription regulator involved in iron deficiency response and tolerance. May regulate directly iron transporters or other transcription factors involved in iron-deficiency response. Binds specifically to the DNA sequence 5'-CATGC-3' of the IDE1 element found in the promoter of the barley iron deficiency-inducible gene IDS2. The chain is B3 domain-containing protein IDEF1 (IDEF1) from Oryza sativa subsp. japonica (Rice).